The primary structure comprises 845 residues: Synaptonemal complex protein 1 (845 aa).

Residues 59–215 are interaction with SYCE3; it reads ETRQVYVDLN…YQLTEEKEAQ (157 aa). Coiled-coil stretches lie at residues 64-211 and 244-544; these read YVDL…LTEE and LRTE…EIEV. A required for pH-induced assembly of C-terminal ends into antiparallel tetramers region spans residues 550–644; sequence EKLLGEVEKA…VSLKKQLEIE (95 aa). Residues 553–556 carry the Nuclear localization signal motif; the sequence is LGEV. Residues 620-663 are a coiled coil; it reads KTALETELSNIRNELVSLKKQLEIEREEKEKLKLEKENTAILKD. Positions 657–845 are DNA-binding; sequence NTAILKDKKD…RLKEAEKLFA (189 aa). S676 carries the post-translational modification Phosphoserine. Residues 684–703 show a composition bias toward polar residues; the sequence is FDSKTTPSQNISRISSSMES. A disordered region spans residues 684–709; that stretch reads FDSKTTPSQNISRISSSMESGKTKDN. A Nuclear localization signal motif is present at residues 753 to 756; that stretch reads KKRK. The tract at residues 786–808 is disordered; the sequence is LYNNNSPNSHLTPKQTPLSLSTP.

Structural component of synaptonemal complexes. Homotetramer that consists of an N-terminal four-helical bundle that bifurcates into two elongated C-terminal dimeric coiled coils. This tetrameric building block potentially self-assembles into a supramolecular zipper-like lattice to mediate meiotic chromosome synapsis. Self-assembly is likely initiated by local proton density at chromosome axis, which is predicted to trigger antiparallel back to back assembly of adjacent C-terminal ends into tetrameric structures that anchor to chromosomal DNA. Then the N-terminal ends are predicted to undergo cooperative antiparallel head to head assembly at the midline of synaptonemal complexes central element to form a zipper-like lattice between properly aligned homologous chromosomes. The nascent synapsis generated by SYCP1 is stabilized through interaction with central element proteins SYCE1 and SYCE2. Interacts (via tetrameric core) with SYCE3; the interaction remodels SYCP1 homotetramers to 2:1 heterotrimers with SYCE3. SYCP1/SYCE3 heterotrimers form lattice assemblies as part of the mature synaptonemal complex via both lateral and head-to-head interactions. Forms a complex with EWSR1, PRDM9, SYCP3 and REC8; complex formation is dependent of phosphorylated form of REC8 and requires PRDM9 bound to hotspot DNA; EWSR1 joins PRDM9 with the chromosomal axis through REC8. Interacts with SPO16.

The protein resides in the nucleus. It is found in the chromosome. Its subcellular location is the centromere. In terms of biological role, major component of the transverse filaments of synaptonemal complexes, formed between homologous chromosomes during meiotic prophase. Required for normal assembly of the central element of the synaptonemal complexes. Required for normal centromere pairing during meiosis. Required for normal meiotic chromosome synapsis during oocyte and spermatocyte development and for normal male and female fertility. In Mesocricetus auratus (Golden hamster), this protein is Synaptonemal complex protein 1.